Consider the following 89-residue polypeptide: Large ribosomal subunit protein bL27 (89 aa).

This sequence belongs to the bacterial ribosomal protein bL27 family.

The chain is Large ribosomal subunit protein bL27 from Cereibacter sphaeroides (strain ATCC 17029 / ATH 2.4.9) (Rhodobacter sphaeroides).